We begin with the raw amino-acid sequence, 356 residues long: Heat-inducible transcription repressor HrcA (356 aa).

The protein belongs to the HrcA family.

In terms of biological role, negative regulator of class I heat shock genes (grpE-dnaK-dnaJ and groELS operons). Prevents heat-shock induction of these operons. The chain is Heat-inducible transcription repressor HrcA from Bartonella tribocorum (strain CIP 105476 / IBS 506).